Consider the following 421-residue polypeptide: 4-hydroxy-3-methylbut-2-en-1-yl diphosphate synthase (flavodoxin) (421 aa).

[4Fe-4S] cluster is bound by residues Cys311, Cys314, Cys357, and Glu364.

The protein belongs to the IspG family. The cofactor is [4Fe-4S] cluster.

The catalysed reaction is (2E)-4-hydroxy-3-methylbut-2-enyl diphosphate + oxidized [flavodoxin] + H2O + 2 H(+) = 2-C-methyl-D-erythritol 2,4-cyclic diphosphate + reduced [flavodoxin]. The protein operates within isoprenoid biosynthesis; isopentenyl diphosphate biosynthesis via DXP pathway; isopentenyl diphosphate from 1-deoxy-D-xylulose 5-phosphate: step 5/6. Converts 2C-methyl-D-erythritol 2,4-cyclodiphosphate (ME-2,4cPP) into 1-hydroxy-2-methyl-2-(E)-butenyl 4-diphosphate. The sequence is that of 4-hydroxy-3-methylbut-2-en-1-yl diphosphate synthase (flavodoxin) from Xanthomonas campestris pv. campestris (strain 8004).